The sequence spans 270 residues: Tryptophan synthase alpha chain (270 aa).

Residues glutamate 49 and aspartate 60 each act as proton acceptor in the active site.

The protein belongs to the TrpA family. As to quaternary structure, tetramer of two alpha and two beta chains.

It carries out the reaction (1S,2R)-1-C-(indol-3-yl)glycerol 3-phosphate + L-serine = D-glyceraldehyde 3-phosphate + L-tryptophan + H2O. It participates in amino-acid biosynthesis; L-tryptophan biosynthesis; L-tryptophan from chorismate: step 5/5. In terms of biological role, the alpha subunit is responsible for the aldol cleavage of indoleglycerol phosphate to indole and glyceraldehyde 3-phosphate. This Paraburkholderia phytofirmans (strain DSM 17436 / LMG 22146 / PsJN) (Burkholderia phytofirmans) protein is Tryptophan synthase alpha chain.